Reading from the N-terminus, the 204-residue chain is UPF0637 protein SaurJH9_1166 (204 aa).

This sequence belongs to the UPF0637 family.

The sequence is that of UPF0637 protein SaurJH9_1166 from Staphylococcus aureus (strain JH9).